Here is a 363-residue protein sequence, read N- to C-terminus: Fructose-bisphosphate aldolase, muscle type (363 aa).

Substrate contacts are provided by Arg-56 and Lys-147. Lys-230 acts as the Schiff-base intermediate with dihydroxyacetone-P in catalysis.

This sequence belongs to the class I fructose-bisphosphate aldolase family. In terms of assembly, homotetramer. As to expression, expressed mainly in the skeletal muscle, heart muscle, brain, and some other tissues, but probably not in liver.

The catalysed reaction is beta-D-fructose 1,6-bisphosphate = D-glyceraldehyde 3-phosphate + dihydroxyacetone phosphate. It functions in the pathway carbohydrate degradation; glycolysis; D-glyceraldehyde 3-phosphate and glycerone phosphate from D-glucose: step 4/4. The protein is Fructose-bisphosphate aldolase, muscle type of Lethenteron camtschaticum (Japanese lamprey).